The primary structure comprises 125 residues: Fluoride-specific ion channel FluC (125 aa).

4 consecutive transmembrane segments (helical) span residues 3 to 23 (FILI…VSKV), 33 to 53 (IPLG…FVLF), 65 to 85 (FVLF…TFAY), and 99 to 119 (LVYF…GMVL). Residues Gly75 and Thr78 each coordinate Na(+).

The protein belongs to the fluoride channel Fluc/FEX (TC 1.A.43) family.

It is found in the cell inner membrane. It carries out the reaction fluoride(in) = fluoride(out). With respect to regulation, na(+) is not transported, but it plays an essential structural role and its presence is essential for fluoride channel function. In terms of biological role, fluoride-specific ion channel. Important for reducing fluoride concentration in the cell, thus reducing its toxicity. This is Fluoride-specific ion channel FluC from Thermosipho melanesiensis (strain DSM 12029 / CIP 104789 / BI429).